Here is a 92-residue protein sequence, read N- to C-terminus: Protein S100-A12 (92 aa).

EF-hand domains lie at 13–48 (NIFH…LKNT) and 49–84 (KDQG…VLIT). Cu cation is bound at residue His-16. Zn(2+) is bound at residue His-16. The Ca(2+) site is built by Ser-19 and His-24. Asp-26 lines the Cu cation pocket. Zn(2+) is bound at residue Asp-26. Residues Thr-27 and Glu-32 each contribute to the Ca(2+) site. The interval 38 to 53 (TKELPNTLKNTKDQGT) is hinge domain. Residues Asp-62, Asn-64, Asp-66, Gln-68, and Glu-73 each coordinate Ca(2+). Residues His-86 and His-90 each contribute to the Cu cation site. Zn(2+) contacts are provided by His-86 and His-90.

The protein belongs to the S-100 family. Homodimer. Homooligomer (tetramer or hexamer) in the presence of calcium, zinc and copper ions. Interacts with AGER and both calcium and zinc are essential for the interaction. Interacts with CACYBP in a calcium-dependent manner. As to expression, found essentially in granulocytes with small amounts found in lymphocytes.

It is found in the secreted. The protein resides in the cytoplasm. The protein localises to the cytoskeleton. It localises to the cell membrane. S100A12 is a calcium-, zinc- and copper-binding protein which plays a prominent role in the regulation of inflammatory processes and immune response. Its pro-inflammatory activity involves recruitment of leukocytes, promotion of cytokine and chemokine production, and regulation of leukocyte adhesion and migration. Acts as an alarmin or a danger associated molecular pattern (DAMP) molecule and stimulates innate immune cells via binding to receptor for advanced glycation endproducts (AGER). Binding to AGER activates the MAP-kinase and NF-kappa-B signaling pathways leading to production of pro-inflammatory cytokines and up-regulation of cell adhesion molecules ICAM1 and VCAM1. Acts as a monocyte and mast cell chemoattractant. Can stimulate mast cell degranulation and activation which generates chemokines, histamine and cytokines inducing further leukocyte recruitment to the sites of inflammation. Can inhibit the activity of matrix metalloproteinases; MMP2, MMP3 and MMP9 by chelating Zn(2+) from their active sites. The chain is Protein S100-A12 (S100A12) from Sus scrofa (Pig).